Reading from the N-terminus, the 267-residue chain is tRNA pseudouridine synthase A (267 aa).

Catalysis depends on D51, which acts as the Nucleophile. Y109 contacts substrate.

The protein belongs to the tRNA pseudouridine synthase TruA family. As to quaternary structure, homodimer.

The enzyme catalyses uridine(38/39/40) in tRNA = pseudouridine(38/39/40) in tRNA. Functionally, formation of pseudouridine at positions 38, 39 and 40 in the anticodon stem and loop of transfer RNAs. The protein is tRNA pseudouridine synthase A of Staphylococcus aureus (strain MSSA476).